Reading from the N-terminus, the 220-residue chain is 2-dehydro-3-deoxy-phosphogluconate aldolase (220 aa).

Glutamate 48 (proton acceptor) is an active-site residue. Arginine 52, threonine 76, and lysine 136 together coordinate pyruvate. Lysine 136 functions as the Schiff-base intermediate with substrate in the catalytic mechanism.

The protein belongs to the KHG/KDPG aldolase family. In terms of assembly, homotrimer.

The enzyme catalyses 2-dehydro-3-deoxy-6-phospho-D-gluconate = D-glyceraldehyde 3-phosphate + pyruvate. It functions in the pathway carbohydrate acid metabolism; 2-dehydro-3-deoxy-D-gluconate degradation; D-glyceraldehyde 3-phosphate and pyruvate from 2-dehydro-3-deoxy-D-gluconate: step 2/2. Involved in the degradation of glucose via the Entner-Doudoroff pathway. Catalyzes the reversible, stereospecific retro-aldol cleavage of 2-keto-3-deoxy-6-phosphogluconate (KDPG) to pyruvate and D-glyceraldehyde-3-phosphate. In Pseudomonas aeruginosa (strain ATCC 15692 / DSM 22644 / CIP 104116 / JCM 14847 / LMG 12228 / 1C / PRS 101 / PAO1), this protein is 2-dehydro-3-deoxy-phosphogluconate aldolase (eda).